The following is a 155-amino-acid chain: Small ribosomal subunit protein uS7cz/uS7cy (155 aa).

This sequence belongs to the universal ribosomal protein uS7 family. In terms of assembly, part of the 30S ribosomal subunit.

It is found in the plastid. The protein resides in the chloroplast. One of the primary rRNA binding proteins, it binds directly to 16S rRNA where it nucleates assembly of the head domain of the 30S subunit. The polypeptide is Small ribosomal subunit protein uS7cz/uS7cy (rps7-A) (Coffea arabica (Arabian coffee)).